The chain runs to 161 residues: Phenolic acid decarboxylase PadC (161 aa).

The substrate site is built by Tyr-11 and Tyr-13. Tyr-19 (proton donor) is an active-site residue. Arg-41 contributes to the substrate binding site. Residue Glu-64 is the Proton acceptor of the active site.

This sequence belongs to the PadC family. In terms of assembly, homodimer.

The enzyme catalyses (E)-4-coumarate + H(+) = 4-vinylphenol + CO2. It carries out the reaction (E)-cinnamate + H(+) = styrene + CO2. The catalysed reaction is (E)-ferulate + H(+) = 2-methoxy-4-vinylphenol + CO2. In terms of biological role, involved in the decarboxylation and detoxification of phenolic derivatives. It is able to catalyze the decarboxylation of ferulic, p-coumaric and caffeic acids. In Bacillus subtilis (strain 168), this protein is Phenolic acid decarboxylase PadC (padC).